Here is a 141-residue protein sequence, read N- to C-terminus: MKAVLQRVKHSSVSVEGKLINEINEGLNVLIGFEKDDNDEKLKKMAKKIVSLRIFGERFEKSVADIKGEILLIPNFTIPAITKKGTRPNFQNSMQPSTAKEFYDKMVKELNNYIPTKAGVFGAEMQVEITNNGPVTIILEV.

Residues Gly-133–Pro-134 carry the Gly-cisPro motif, important for rejection of L-amino acids motif.

This sequence belongs to the DTD family. In terms of assembly, homodimer.

The protein resides in the cytoplasm. It carries out the reaction glycyl-tRNA(Ala) + H2O = tRNA(Ala) + glycine + H(+). The catalysed reaction is a D-aminoacyl-tRNA + H2O = a tRNA + a D-alpha-amino acid + H(+). An aminoacyl-tRNA editing enzyme that deacylates mischarged D-aminoacyl-tRNAs. Also deacylates mischarged glycyl-tRNA(Ala), protecting cells against glycine mischarging by AlaRS. Acts via tRNA-based rather than protein-based catalysis; rejects L-amino acids rather than detecting D-amino acids in the active site. By recycling D-aminoacyl-tRNA to D-amino acids and free tRNA molecules, this enzyme counteracts the toxicity associated with the formation of D-aminoacyl-tRNA entities in vivo and helps enforce protein L-homochirality. The protein is D-aminoacyl-tRNA deacylase of Nautilia profundicola (strain ATCC BAA-1463 / DSM 18972 / AmH).